An 886-amino-acid polypeptide reads, in one-letter code: Semaphorin-6B (886 aa).

Residues 1 to 26 form the signal peptide; sequence MWTPRVPPPRPALSFFLLLLLGVTYG. The Extracellular portion of the chain corresponds to 27–605; it reads LFPEEPPPLS…VSVNLLVTSS (579 aa). The Sema domain occupies 32 to 525; that stretch reads PPPLSVAPRD…FPRCVVRVPV (494 aa). N-linked (GlcNAc...) asparagine glycosylation occurs at asparagine 75. 2 disulfide bridges follow: cysteine 117-cysteine 127 and cysteine 145-cysteine 154. N-linked (GlcNAc...) asparagine glycosylation is found at asparagine 156 and asparagine 292. Cystine bridges form between cysteine 268–cysteine 379 and cysteine 293–cysteine 338. N-linked (GlcNAc...) asparagine glycosylation is found at asparagine 387, asparagine 442, and asparagine 463. Intrachain disulfides connect cysteine 487–cysteine 519, cysteine 528–cysteine 546, cysteine 534–cysteine 580, and cysteine 538–cysteine 554. The helical transmembrane segment at 606–626 threads the bilayer; that stretch reads VAAFVVGAVVSGFSVGWFVGL. Topologically, residues 627 to 886 are cytoplasmic; that stretch reads RERRELARRK…TGERTAPPVP (260 aa). 3 disordered regions span residues 655–677, 697–731, and 761–886; these read RLGE…PGGP, HGGP…AHAL, and EQPQ…PPVP. The span at 662–674 shows a compositional bias: gly residues; sequence TGPGGRGGAGGGP. Residue arginine 667 is modified to Omega-N-methylarginine. Residues 707–718 are compositionally biased toward low complexity; sequence LLPTPEQTPLPQ.

The protein belongs to the semaphorin family. Homodimer. Binds specifically the SH3 domain of the protooncogene C-SRC. In terms of tissue distribution, in adulthood, it is expressed ubiquitously.

It is found in the cell membrane. Functionally, functions as a cell surface repellent for mossy fibers of developing neurons in the hippocampus where it plays a role in axon guidance. May function through the PLXNA4 receptor expressed by mossy cell axons. The chain is Semaphorin-6B (Sema6b) from Mus musculus (Mouse).